Here is a 437-residue protein sequence, read N- to C-terminus: Protein translocase subunit SecY (437 aa).

10 helical membrane passes run 19–39 (LFTL…IPGV), 69–89 (LLQI…SIIL), 122–142 (VALA…GALF), 157–177 (IFTT…VMWL), 189–209 (GMSI…LWSI), 219–239 (WIEF…VVFV), 275–295 (GIIP…VVQF), 318–338 (HITV…AISF), 378–398 (GSLY…PLGA), and 400–420 (QNFP…LETV).

It belongs to the SecY/SEC61-alpha family. As to quaternary structure, component of the Sec protein translocase complex. Heterotrimer consisting of SecY, SecE and SecG subunits. The heterotrimers can form oligomers, although 1 heterotrimer is thought to be able to translocate proteins. Interacts with the ribosome. Interacts with SecDF, and other proteins may be involved. Interacts with SecA.

The protein resides in the cell membrane. In terms of biological role, the central subunit of the protein translocation channel SecYEG. Consists of two halves formed by TMs 1-5 and 6-10. These two domains form a lateral gate at the front which open onto the bilayer between TMs 2 and 7, and are clamped together by SecE at the back. The channel is closed by both a pore ring composed of hydrophobic SecY resides and a short helix (helix 2A) on the extracellular side of the membrane which forms a plug. The plug probably moves laterally to allow the channel to open. The ring and the pore may move independently. This is Protein translocase subunit SecY from Streptomyces scabiei.